We begin with the raw amino-acid sequence, 617 residues long: Na(+)/H(+) antiporter NhaA 1 (617 aa).

The tract at residues 1–433 is na(+)/H(+) antiporter NhaA; sequence MTVTEQTTAR…GWAIFRITDW (433 aa). A run of 11 helical transmembrane segments spans residues 33–53, 75–95, 113–133, 141–161, 171–191, 194–214, 234–254, 304–324, 340–360, 378–398, and 411–431; these read AAAL…SPWA, MTVK…IVGL, AVPV…FLAF, HAWG…LAII, LFLL…IAVF, DAIQ…LALV, VALY…ALLI, VGPA…AGVL, WGVV…ATWL, IAGG…IVDI, and IGVL…FRIT. Residues 434–617 form the Thioredoxin domain; it reads LSPPEPVGLK…LIRALEAGRR (184 aa).

It in the N-terminal section; belongs to the NhaA Na(+)/H(+) (TC 2.A.33) antiporter family.

The protein resides in the cell membrane. The catalysed reaction is Na(+)(in) + 2 H(+)(out) = Na(+)(out) + 2 H(+)(in). In terms of biological role, na(+)/H(+) antiporter that extrudes sodium in exchange for external protons. The polypeptide is Na(+)/H(+) antiporter NhaA 1 (Mycolicibacterium vanbaalenii (strain DSM 7251 / JCM 13017 / BCRC 16820 / KCTC 9966 / NRRL B-24157 / PYR-1) (Mycobacterium vanbaalenii)).